We begin with the raw amino-acid sequence, 286 residues long: Polyamine aminopropyltransferase (286 aa).

A PABS domain is found at 5–238 (TMWHETLHDQ…GIMTFAWATD (234 aa)). Gln33 lines the S-methyl-5'-thioadenosine pocket. Spermidine is bound by residues His64 and Asp88. S-methyl-5'-thioadenosine-binding positions include Glu108 and 140–141 (DG). The active-site Proton acceptor is the Asp158. 158–161 (DCTD) is a binding site for spermidine. Pro165 provides a ligand contact to S-methyl-5'-thioadenosine.

Belongs to the spermidine/spermine synthase family. Homodimer or homotetramer.

Its subcellular location is the cytoplasm. The catalysed reaction is S-adenosyl 3-(methylsulfanyl)propylamine + putrescine = S-methyl-5'-thioadenosine + spermidine + H(+). The protein operates within amine and polyamine biosynthesis; spermidine biosynthesis; spermidine from putrescine: step 1/1. Functionally, catalyzes the irreversible transfer of a propylamine group from the amino donor S-adenosylmethioninamine (decarboxy-AdoMet) to putrescine (1,4-diaminobutane) to yield spermidine. The polypeptide is Polyamine aminopropyltransferase (Salmonella schwarzengrund (strain CVM19633)).